A 414-amino-acid polypeptide reads, in one-letter code: Histidinol dehydrogenase (414 aa).

Residues tyrosine 116, glutamine 177, and asparagine 200 each coordinate NAD(+). The substrate site is built by threonine 223, glutamine 245, and histidine 248. Zn(2+) is bound by residues glutamine 245 and histidine 248. Residues glutamate 313 and histidine 314 each act as proton acceptor in the active site. Residues histidine 314, aspartate 347, glutamate 401, and histidine 406 each coordinate substrate. Aspartate 347 lines the Zn(2+) pocket. Histidine 406 serves as a coordination point for Zn(2+).

This sequence belongs to the histidinol dehydrogenase family. The cofactor is Zn(2+).

The enzyme catalyses L-histidinol + 2 NAD(+) + H2O = L-histidine + 2 NADH + 3 H(+). The protein operates within amino-acid biosynthesis; L-histidine biosynthesis; L-histidine from 5-phospho-alpha-D-ribose 1-diphosphate: step 9/9. Catalyzes the sequential NAD-dependent oxidations of L-histidinol to L-histidinaldehyde and then to L-histidine. This chain is Histidinol dehydrogenase, found in Staphylococcus epidermidis (strain ATCC 35984 / DSM 28319 / BCRC 17069 / CCUG 31568 / BM 3577 / RP62A).